Consider the following 152-residue polypeptide: Large ribosomal subunit protein bL9 (152 aa).

The protein belongs to the bacterial ribosomal protein bL9 family.

Binds to the 23S rRNA. The protein is Large ribosomal subunit protein bL9 of Streptococcus thermophilus (strain ATCC BAA-491 / LMD-9).